Consider the following 847-residue polypeptide: Receptor-like protein 12 (847 aa).

Residues 1-27 form the signal peptide; sequence MMIRSHRHWVFSSRIIIFLSLLVHSLA. The Extracellular portion of the chain corresponds to 28–798; the sequence is SSSPHFCRDD…LSEAEENMFN (771 aa). Residues asparagine 52, asparagine 66, asparagine 103, and asparagine 132 are each glycosylated (N-linked (GlcNAc...) asparagine). LRR repeat units follow at residues 109–133, 135–157, 158–181, 183–205, 206–229, 231–253, 254–277, 279–301, 302–325, 326–350, 351–374, 375–398, 400–422, 424–442, 443–466, 467–491, 492–514, 516–539, 541–562, 563–587, 589–613, 657–681, 682–704, 705–729, and 731–754; these read LQYLRHLDLTNCNLYGEIPSSLGNL, HLTLVNLYFNKFVGEIPASIGNL, NQLRHLILANNVLTGEIPSSLGNL, RLVNLELFSNRLVGKIPDSIGDL, KQLRNLSLASNNLIGEIPSSLGNL, NLVHLVLTHNQLVGEVPASIGNL, IELRVMSFENNSLSGNIPISFANL, KLSIFVLSSNNFTSTFPFDMSIF, HNLEYFDVSYNSFSGPFPKSLLLI, PSLESIYLQENQFTGPIEFANTSSS, TKLQDLILGRNRLHGPIPESISRL, LNLEELDISHNNFTGAIPPTISKL, NLLHLDLSKNNLEGEVPACLWRL, TMVLSHNSFSSFENTSQEE, ALIEELDLNSNSFQGPIPYMICKL, SSLGFLDLSNNLFSGSIPSCIRNFS, GSIKELNLGDNNFSGTLPDIFSK, TELVSLDVSHNQLEGKFPKSLINC, ALELVNVESNKIKDIFPSWLES, LPSLHVLNLRSNKFYGPLYHRHASI, FQSLRIIDISHNNFSGTLPPYYFSN, RRDFRAIDFSGNKINGNIPESLGYL, KELRVLNLSGNAFTSVIPRFLAN, LTKLETLDISRNKLSGQIPQDLAAL, and FLSYMNFSHNLLQGPVPRGTQFQR. A glycan (N-linked (GlcNAc...) asparagine) is linked at asparagine 180. N-linked (GlcNAc...) asparagine glycosylation is found at asparagine 210 and asparagine 228. N-linked (GlcNAc...) asparagine glycosylation is found at asparagine 263, asparagine 276, and asparagine 289. The N-linked (GlcNAc...) asparagine glycan is linked to asparagine 346. Asparagine 386 carries an N-linked (GlcNAc...) asparagine glycan. Asparagine 437 is a glycosylation site (N-linked (GlcNAc...) asparagine). Asparagine 489 and asparagine 503 each carry an N-linked (GlcNAc...) asparagine glycan. An N-linked (GlcNAc...) asparagine glycan is attached at asparagine 601. Residues asparagine 688 and asparagine 704 are each glycosylated (N-linked (GlcNAc...) asparagine). Asparagine 736 is a glycosylation site (N-linked (GlcNAc...) asparagine). A helical membrane pass occupies residues 799-819; that stretch reads WVAAAIAYGPGVLCGLVIGHF. At 820–847 the chain is on the cytoplasmic side; sequence YTSHNHEWFTEKFGRKQHKALTSVKCSL.

It belongs to the RLP family.

It localises to the cell membrane. Involved in the perception of CLV3 and CLV3-like peptides, that act as extracellular signals regulating meristems maintenance. The protein is Receptor-like protein 12 of Arabidopsis thaliana (Mouse-ear cress).